Consider the following 1320-residue polypeptide: Sister chromatid cohesion protein PDS5 homolog A (1320 aa).

HEAT repeat units lie at residues 156–195, 272–310, 388–426, 709–747, and 990–1028; these read NEIF…EGDG, PLLL…AKDS, NLVN…KYCL, PQIR…NKEV, and SLLP…CLWF. The span at 1158 to 1179 shows a compositional bias: polar residues; the sequence is TFTSETGSNASTNSQPSSPATN. Residues 1158–1320 are disordered; that stretch reads TFTSETGSNA…APQRQIDLQR (163 aa). Positions 1180 to 1194 are enriched in basic and acidic residues; it reads KSRDVSSEVGARENE. Over residues 1225 to 1241 the composition is skewed to polar residues; it reads GTENSVSSNPSAGSQPP. Low complexity predominate over residues 1255–1267; that stretch reads AGAATQEKEAGAT. Residues 1283 to 1293 are compositionally biased toward polar residues; it reads QDPSSTASTDA. Positions 1294–1309 are enriched in basic and acidic residues; sequence LSDKTPKQQKEAEPKR.

It belongs to the PDS5 family. As to quaternary structure, interacts with the cohesin complex. Binds chromatin in a cohesin-dependent manner.

The protein localises to the nucleus. In terms of biological role, may regulate sister chromatid cohesion during mitosis and couple it to DNA replication. This chain is Sister chromatid cohesion protein PDS5 homolog A, found in Danio rerio (Zebrafish).